Reading from the N-terminus, the 477-residue chain is Trigger factor (477 aa).

Residues 169–254 form the PPIase FKBP-type domain; the sequence is EDRVTIDYLG…VKEVAKPNEL (86 aa). The tract at residues 435 to 477 is disordered; it reads VSKEELTAEDEDAASEAKPAKKAAPKKKAAPKKKADEGKSEEA. A compositionally biased stretch (basic residues) spans 454-466; sequence AKKAAPKKKAAPK. Residues 467-477 show a composition bias toward basic and acidic residues; that stretch reads KKADEGKSEEA.

It belongs to the FKBP-type PPIase family. Tig subfamily.

It localises to the cytoplasm. The catalysed reaction is [protein]-peptidylproline (omega=180) = [protein]-peptidylproline (omega=0). Its function is as follows. Involved in protein export. Acts as a chaperone by maintaining the newly synthesized protein in an open conformation. Functions as a peptidyl-prolyl cis-trans isomerase. This is Trigger factor from Brucella anthropi (strain ATCC 49188 / DSM 6882 / CCUG 24695 / JCM 21032 / LMG 3331 / NBRC 15819 / NCTC 12168 / Alc 37) (Ochrobactrum anthropi).